The chain runs to 134 residues: Small ribosomal subunit protein uS11 (134 aa).

Disordered regions lie at residues 1-24 and 115-134; these read MPPKSRAGAVKKVRRKEKKNVAHG and IQDVTPQPHNGCRPPKRRRV. Residues 9-18 show a composition bias toward basic residues; sequence AVKKVRRKEK.

The protein belongs to the universal ribosomal protein uS11 family. In terms of assembly, part of the 30S ribosomal subunit. Interacts with proteins S7 and S18. Binds to IF-3.

Located on the platform of the 30S subunit, it bridges several disparate RNA helices of the 16S rRNA. Forms part of the Shine-Dalgarno cleft in the 70S ribosome. This chain is Small ribosomal subunit protein uS11, found in Saccharopolyspora erythraea (strain ATCC 11635 / DSM 40517 / JCM 4748 / NBRC 13426 / NCIMB 8594 / NRRL 2338).